The primary structure comprises 1679 residues: Lysophospholipase NTE1 (1679 aa).

Low complexity predominate over residues M1–N20. Residues M1–S21 form a disordered region. The Cytoplasmic portion of the chain corresponds to M1–Q49. The helical transmembrane segment at T50–A70 threads the bilayer. The Lumenal segment spans residues S71–T103. The chain crosses the membrane as a helical span at residues L104 to M124. The Cytoplasmic segment spans residues K125–I1679. The segment covering S261–T274 has biased composition (basic and acidic residues). The segment at S261–N304 is disordered. Residues D275–N295 are compositionally biased toward acidic residues. A phosphoserine mark is found at S300 and S312. Disordered regions lie at residues S498 to D527 and D586 to R672. 2 stretches are compositionally biased toward polar residues: residues P592–T606 and F630–T652. Phosphoserine occurs at positions 632, 634, 653, 661, 670, 680, and 739. The disordered stretch occupies residues K775–E800. Residues K788–E800 are compositionally biased toward basic and acidic residues. T803 carries the phosphothreonine modification. A nucleoside 3',5'-cyclic phosphate-binding positions include T803 to L947 and S943 to K1074. Positions S855–T882 are disordered. Residues M862–S873 show a composition bias toward polar residues. The PNPLA domain occupies L1373–R1537. Residues G1377–G1382 carry the GXGXXG motif. The short motif at G1404–G1408 is the GXSXG element. S1406 acts as the Nucleophile in catalysis. The Proton acceptor role is filled by D1524. The short motif at D1524–G1526 is the DGA/G element.

This sequence belongs to the NTE family.

It localises to the endoplasmic reticulum membrane. The protein resides in the lipid droplet. The catalysed reaction is a 1-acyl-sn-glycero-3-phosphocholine + H2O = sn-glycerol 3-phosphocholine + a fatty acid + H(+). The enzyme catalyses a 1,2-diacyl-sn-glycero-3-phosphocholine + 2 H2O = sn-glycerol 3-phosphocholine + 2 a carboxylate + 2 H(+). Its activity is regulated as follows. Positively regulated by SEC14. Inhibited by organophosphorus esters in the order phenyl saligenin phosphate (PSP) &gt; phenyldipentyl phosphinate (PDPP) = diisopropyl fluorophosphate (DFP) &gt; and paraoxon (PXN). In terms of biological role, intracellular phospholipase B that catalyzes the double deacylation of phosphatidylcholine (PC) to glycerophosphocholine (GroPCho). Plays an important role in membrane lipid homeostasis. Responsible for the rapid PC turnover in response to inositol, elevated temperatures, or when choline is present in the growth medium. NTE1 activity impacts the repressing transcriptional activity of OPI1, the main regulator of phospholipid synthesis gene transcription. The protein is Lysophospholipase NTE1 (NTE1) of Saccharomyces cerevisiae (strain ATCC 204508 / S288c) (Baker's yeast).